Here is a 671-residue protein sequence, read N- to C-terminus: MAHKKQAWAKRVKKERFKKKFLTRMQATRLLQMESVQFRRLCILKGIYPRALNRSKQKQSGHEKQYYLAREIKWLVRDQIAEKMMAYRAWEKKVKRAEAMGRSEDLKVLQSSRVKPRHSLVATIKERYPYFIDAIRDVDDAMSMIHLYAFLSPEIKSDTTIEIHHSLTSGMSEKAKEVCERWDRYVARARVLTKGFISIKGYYYEAIVKGERVRWLCPHEYAHRFPPGIQQYVMLSFLEFYLEMMKFVLFKLESDLARDEADRLAAEDEEGVTRANAEDFANGGALAVLDVGANGAQAKEVKEAESKRSLMGEELHKVRELFRGLTFFISREVPSKRFALVINACGGRVATDYVPSNITHVVVDRPALPPGMKKHDQLEYVQPQYIFDCLNARLMLPVTGYRIGEELPPHVSPFSVSITNSAEDNAAVEQVKKDHPRIVGYVPARVHEIRKLINPSYSAVDPEGKVAHLEGEYSDEESHVAVPEMDMEDDVSLSGDELAEARRKPAWQEEEVTEEVQRPKLSAFKVKKQREMNLMNAPTNEVVARRRQALRKAQEKSRQTETSEARLQRKMSEVKRQEAATRKMQLQVARKKAARFYKMISGVVQGTAKKAATLEAKAKHIAEGKLHKTEDGKGLVNTRLEARRQRAEAKSKKLKERKAGNPYKKLPKWVQ.

The region spanning 317–403 (KVRELFRGLT…LMLPVTGYRI (87 aa)) is the BRCT domain. Residues 548 to 584 (QALRKAQEKSRQTETSEARLQRKMSEVKRQEAATRKM) are a coiled coil. Disordered stretches follow at residues 552 to 578 (KAQE…KRQE) and 643 to 671 (RRQR…KWVQ).

This sequence belongs to the pescadillo family.

The protein localises to the nucleus. The protein resides in the nucleolus. It localises to the nucleoplasm. Functionally, required for maturation of ribosomal RNAs and formation of the large ribosomal subunit. This is Pescadillo homolog from Leishmania infantum.